The primary structure comprises 84 residues: Acyl carrier protein (84 aa).

A Carrier domain is found at 1-75; sequence MIFQKIQEFI…DILEYIQQHV (75 aa). At serine 35 the chain carries O-(pantetheine 4'-phosphoryl)serine.

This sequence belongs to the acyl carrier protein (ACP) family. 4'-phosphopantetheine is transferred from CoA to a specific serine of apo-ACP by AcpS. This modification is essential for activity because fatty acids are bound in thioester linkage to the sulfhydryl of the prosthetic group.

Its subcellular location is the cytoplasm. It functions in the pathway lipid metabolism; fatty acid biosynthesis. Functionally, carrier of the growing fatty acid chain in fatty acid biosynthesis. The chain is Acyl carrier protein from Phytoplasma mali (strain AT).